We begin with the raw amino-acid sequence, 76 residues long: Pigment-dispersing hormone A peptides (76 aa).

Residues 1–20 (MRSAMVVLVLVAMVAVFTRA) form the signal peptide. A73 bears the Alanine amide mark.

Belongs to the arthropod PDH family. Optical ganglia of the eyestalk.

The protein localises to the secreted. The pigment-dispersing hormone causes the migration of the distal retinal pigment into the proximal end of the pigment chromatophore cells and thus decreases the amount of light entering the retinulas. May also function as a neurotransmitter and/or neuromodulator. The polypeptide is Pigment-dispersing hormone A peptides (Faxonius limosus (Spinycheek crayfish)).